Reading from the N-terminus, the 601-residue chain is Methionine--tRNA ligase (601 aa).

Positions 21-31 (PYANGPRHIGH) match the 'HIGH' region motif. Zn(2+) contacts are provided by C153, C156, C166, and C169. N361 is a binding site for ATP.

This sequence belongs to the class-I aminoacyl-tRNA synthetase family. MetG type 1 subfamily. In terms of assembly, monomer. Zn(2+) is required as a cofactor.

The protein localises to the cytoplasm. It catalyses the reaction tRNA(Met) + L-methionine + ATP = L-methionyl-tRNA(Met) + AMP + diphosphate. In terms of biological role, is required not only for elongation of protein synthesis but also for the initiation of all mRNA translation through initiator tRNA(fMet) aminoacylation. This is Methionine--tRNA ligase from Cutibacterium acnes (strain DSM 16379 / KPA171202) (Propionibacterium acnes).